The chain runs to 421 residues: uncharacterized protein (421 aa).

The TRAM domain maps to 14–72 (DLTKGDTITVEVTRPAHGGEGIAHHGGRVIFVRGGFPGDDVDVEITQVKKRFARGFVVQ). S-adenosyl-L-methionine-binding residues include Gln250, Tyr286, Glu308, and Asp349. Catalysis depends on Cys376, which acts as the Nucleophile.

This sequence belongs to the class I-like SAM-binding methyltransferase superfamily. RNA M5U methyltransferase family.

This is an uncharacterized protein from Corynebacterium efficiens (strain DSM 44549 / YS-314 / AJ 12310 / JCM 11189 / NBRC 100395).